We begin with the raw amino-acid sequence, 601 residues long: Pyranose 2-oxidase (601 aa).

Residue histidine 151 is modified to Tele-8alpha-FAD histidine. Residues glutamine 406 and histidine 408 each contribute to the substrate site. Catalysis depends on histidine 505, which acts as the Proton acceptor. The active site involves asparagine 558. Residues 577-601 are disordered; that stretch reads KLGKKGSHSGNRDDGDVDTDTDDDA. A compositionally biased stretch (acidic residues) spans 591–601; sequence GDVDTDTDDDA.

Belongs to the GMC oxidoreductase family. In terms of assembly, homotetramer. FAD serves as cofactor.

It catalyses the reaction D-glucose + O2 = 2-dehydro-D-glucose + H2O2. Functionally, catalyzes the oxidation of various aldopyranoses and disaccharides on carbon-2 to the corresponding 2-keto sugars concomitant with the reduction of O(2) to H(2)O(2). In Emericella nidulans (strain FGSC A4 / ATCC 38163 / CBS 112.46 / NRRL 194 / M139) (Aspergillus nidulans), this protein is Pyranose 2-oxidase (p2ox).